Reading from the N-terminus, the 264-residue chain is Ribosomal protein L11 methyltransferase (264 aa).

S-adenosyl-L-methionine is bound by residues Thr-116, Gly-137, Asp-159, and Asn-200.

Belongs to the methyltransferase superfamily. PrmA family.

It is found in the cytoplasm. It catalyses the reaction L-lysyl-[protein] + 3 S-adenosyl-L-methionine = N(6),N(6),N(6)-trimethyl-L-lysyl-[protein] + 3 S-adenosyl-L-homocysteine + 3 H(+). Methylates ribosomal protein L11. This Thermotoga neapolitana (strain ATCC 49049 / DSM 4359 / NBRC 107923 / NS-E) protein is Ribosomal protein L11 methyltransferase.